The following is a 511-amino-acid chain: Cytochrome P450 93B2 (511 aa).

A helical membrane pass occupies residues 4-24; the sequence is LQLIFLLFFFPTLLFLYCLPY. A heme-binding site is contributed by Cys447.

This sequence belongs to the cytochrome P450 family. Requires heme as cofactor.

It is found in the membrane. The catalysed reaction is a flavanone + reduced [NADPH--hemoprotein reductase] + O2 = a flavone + oxidized [NADPH--hemoprotein reductase] + 2 H2O + H(+). It participates in secondary metabolite biosynthesis; flavonoid biosynthesis. Functionally, functions as a flavone synthase II (FNSII) that catalyzes the direct conversion of flavanones to flavones. In vitro, can convert liquiritigenin, naringenin and eriodictyol to 7,4'-dihydroxyflavone, apigenin and luteolin, respectively. The chain is Cytochrome P450 93B2 from Gerbera hybrida (Daisy).